A 423-amino-acid polypeptide reads, in one-letter code: Protein FAM43A (423 aa).

A compositionally biased stretch (acidic residues) spans 263–283 (EQELQEEEEEEQPEGCPEEEE). Disordered stretches follow at residues 263-298 (EQEL…EAEA), 321-344 (RGEA…LLLG), and 382-423 (LSGD…PHSG). The segment covering 323–335 (EALGGGGGSLGPG) has biased composition (gly residues). Positions 383 to 393 (SGDSTGSESSI) are enriched in low complexity. Positions 401–411 (TSATAGDSSRQ) are enriched in polar residues.

It belongs to the FAM43 family.

The protein is Protein FAM43A (FAM43A) of Homo sapiens (Human).